The primary structure comprises 165 residues: Phosphopantetheine adenylyltransferase (165 aa).

S10 provides a ligand contact to substrate. ATP contacts are provided by residues 10–11 (SF) and H18. Substrate is bound by residues K42, S79, and R93. Residues 94–96 (GLR), E104, and 129–135 (VRPITAT) contribute to the ATP site.

This sequence belongs to the bacterial CoaD family. As to quaternary structure, homohexamer. The cofactor is Mg(2+).

Its subcellular location is the cytoplasm. It carries out the reaction (R)-4'-phosphopantetheine + ATP + H(+) = 3'-dephospho-CoA + diphosphate. It participates in cofactor biosynthesis; coenzyme A biosynthesis; CoA from (R)-pantothenate: step 4/5. Reversibly transfers an adenylyl group from ATP to 4'-phosphopantetheine, yielding dephospho-CoA (dPCoA) and pyrophosphate. The polypeptide is Phosphopantetheine adenylyltransferase (Bradyrhizobium diazoefficiens (strain JCM 10833 / BCRC 13528 / IAM 13628 / NBRC 14792 / USDA 110)).